The chain runs to 308 residues: Staphylococcal superantigen-like 4 (308 aa).

The N-terminal stretch at 1-30 (MKITTIAKTSLALGLLTTGVITTTTQAANA) is a signal peptide. The disordered stretch occupies residues 32–117 (TLSSTKVEAP…TTKQVPTEIN (86 aa)). Polar residues-rich tracts occupy residues 33-47 (LSST…TPPS) and 55-76 (SKPN…TANA). Residues 77-93 (TTPPSTKVTTPPSTNTP) show a composition bias toward low complexity. Positions 94-114 (QPMQSTKSDTPQSPTTKQVPT) are enriched in polar residues. Positions 180 to 278 (VDVFVVLEEN…VIKMKNGGKY (99 aa)) are sialyl Lewis X-binding.

It belongs to the staphylococcal/streptococcal toxin family.

It is found in the secreted. Its function is as follows. Secreted protein that plays a role in immune innate response inhibition by interfering with host TLR2-mediated pathway. This chain is Staphylococcal superantigen-like 4, found in Staphylococcus aureus (strain NCTC 8325 / PS 47).